The chain runs to 514 residues: Peptide chain release factor 3 (514 aa).

Residues 8 to 268 (KKRRTFAIIS…TFLKFAPEPH (261 aa)) form the tr-type G domain. GTP contacts are provided by residues 17 to 24 (SHPDAGKT), 85 to 89 (DTPGH), and 139 to 142 (NKLD).

Belongs to the TRAFAC class translation factor GTPase superfamily. Classic translation factor GTPase family. PrfC subfamily.

Its subcellular location is the cytoplasm. In terms of biological role, increases the formation of ribosomal termination complexes and stimulates activities of RF-1 and RF-2. It binds guanine nucleotides and has strong preference for UGA stop codons. It may interact directly with the ribosome. The stimulation of RF-1 and RF-2 is significantly reduced by GTP and GDP, but not by GMP. This Streptococcus pneumoniae (strain Hungary19A-6) protein is Peptide chain release factor 3.